The following is an 877-amino-acid chain: MAAERYNPRVAEAHWQKVWEEDRTFETDNSDSREKYYVLEMFPYPSGRIHMGHVRNYAMGDVVARYKRAKGFNVLHPMGWDAFGMPAENAAMQNKVHPKEWTYQNIATMRSQLKSMGLSLDWAREFATCDVEYYHRQQMLFIDLFEKGLVTRKTSKVNWDPVDNTVLANEQVVDGRGWRSGALVEQRELTQWFFKITDFSEELLAGLDTLDQWPEKVRLMQRNWIGKSEGLQVRFTLDGKTAPEGFSEVEVYTTRPDTLFGAAFVGISADHPLAKKLAENNASLTGFIEECHQHGTSLAALETAEKKGFDTGVKVKHPFDENWELPVYVANFVLMEYGTGAVFGCPAHDQRDLDFANKYKLKVTPVVMPKGEDAAGFSIGETAYTDDGVMINSRFLDGMTPEAAFNEVANRLEQTSLGNSPQASRKVQFRLRDWGISRQRYWGCPIPMIHCESCGVNPVPRADLPVKLPDDVEFDRPGNPLDRHATWRHVKCPKCGADARRETDTMDTFVDSSWYYARFTAPWENEPTDRKVADHWLPVDQYIGGIEHAILHLLYSRFFTRAMKVAGHVGIDEPFKGLFTQGMVVHETYKANGQWVAPADIRIEETDGKRSAALLSTGEPVEIGSIEKMSKSKKNVVDPDDIIASYGADTARWFMLSDSPPERDVIWTEAGAEGAHRFVQRVWRLVAEAAEHLKDVAPKTGTQGEALVVSKAAHKAVKAVGDDIEKLAFNRGVARLYELVNTAAASLQQVASGNADDELKSAVRDVTEKLILMLAPMMPHLAEQCLAVLGGKIAGRETLVARSAWPEFDPALVVENEIVMPVQINGKKRGDLTIARDADQASIQQAVLELDFVKAALNGSSPKKVIVVPQRIVNVVA.

The 'HIGH' region motif lies at 43–53 (PYPSGRIHMGH). Positions 628 to 632 (KMSKS) match the 'KMSKS' region motif. K631 serves as a coordination point for ATP.

The protein belongs to the class-I aminoacyl-tRNA synthetase family.

It localises to the cytoplasm. The catalysed reaction is tRNA(Leu) + L-leucine + ATP = L-leucyl-tRNA(Leu) + AMP + diphosphate. The polypeptide is Leucine--tRNA ligase (Brucella anthropi (strain ATCC 49188 / DSM 6882 / CCUG 24695 / JCM 21032 / LMG 3331 / NBRC 15819 / NCTC 12168 / Alc 37) (Ochrobactrum anthropi)).